The sequence spans 634 residues: Threonine--tRNA ligase (634 aa).

The TGS domain occupies 1–61; it reads MINIRFPDGS…NSNCELRLIT (61 aa). The tract at residues 241-532 is catalytic; it reads DHRKIGKVLD…LIEHYAGNLP (292 aa). Residues Cys332, His383, and His509 each contribute to the Zn(2+) site.

It belongs to the class-II aminoacyl-tRNA synthetase family. Homodimer. Zn(2+) serves as cofactor.

It is found in the cytoplasm. It carries out the reaction tRNA(Thr) + L-threonine + ATP = L-threonyl-tRNA(Thr) + AMP + diphosphate + H(+). Catalyzes the attachment of threonine to tRNA(Thr) in a two-step reaction: L-threonine is first activated by ATP to form Thr-AMP and then transferred to the acceptor end of tRNA(Thr). Also edits incorrectly charged L-seryl-tRNA(Thr). The sequence is that of Threonine--tRNA ligase from Francisella tularensis subsp. tularensis (strain FSC 198).